An 83-amino-acid polypeptide reads, in one-letter code: Large ribosomal subunit protein uL24 (83 aa).

This sequence belongs to the universal ribosomal protein uL24 family. As to quaternary structure, part of the 50S ribosomal subunit.

Its function is as follows. One of two assembly initiator proteins, it binds directly to the 5'-end of the 23S rRNA, where it nucleates assembly of the 50S subunit. In terms of biological role, one of the proteins that surrounds the polypeptide exit tunnel on the outside of the subunit. This is Large ribosomal subunit protein uL24 from Symbiobacterium thermophilum (strain DSM 24528 / JCM 14929 / IAM 14863 / T).